Here is a 619-residue protein sequence, read N- to C-terminus: Zinc finger protein 668 (619 aa).

N-acetylmethionine is present on M1. Phosphoserine is present on S10. Residues 22-44 form a C2H2-type 1 zinc finger; it reads YKCLFCTKTFPNAPRAARHAATH. The disordered stretch occupies residues 36 to 74; it reads RAARHAATHTPTDCTEEVREAQPKVDTEPKAEEASGDKV. Positions 51-71 are enriched in basic and acidic residues; that stretch reads EEVREAQPKVDTEPKAEEASG. Glycyl lysine isopeptide (Lys-Gly) (interchain with G-Cter in SUMO2) cross-links involve residues K59, K65, and K80. 11 C2H2-type zinc fingers span residues 84 to 106, 112 to 134, 140 to 162, 168 to 190, 196 to 218, 224 to 246, 252 to 274, 280 to 302, 308 to 330, 336 to 358, and 364 to 386; these read YACP…GRSH, FPCP…LASH, FRCT…QRGH, YACP…RRTH, YSCE…ERSH, FLCS…QRIH, YRCP…ERTH, FLCP…QRAH, YRCE…RRVH, FKCL…ALVH, and FRCE…SRMH. Residue K154 forms a Glycyl lysine isopeptide (Lys-Gly) (interchain with G-Cter in SUMO2) linkage. At S387 the chain carries Phosphoserine. The C2H2-type 13 zinc-finger motif lies at 392 to 414; it reads FHCNACGKSFVVLSSLRKHERTH. Residues 491 to 513 are disordered; sequence VGEAPSTLGDAGEVGGEETDEKP. K512 is covalently cross-linked (Glycyl lysine isopeptide (Lys-Gly) (interchain with G-Cter in SUMO2)). C2H2-type zinc fingers lie at residues 516-538, 544-566, and 572-594; these read FVCR…ERSH, FPCT…SRTH, and YSCS…ERTH.

This sequence belongs to the krueppel C2H2-type zinc-finger protein family.

The protein resides in the nucleus. Its function is as follows. May be involved in transcriptional regulation. May play a role in DNA repair process. The chain is Zinc finger protein 668 (Znf668) from Mus musculus (Mouse).